We begin with the raw amino-acid sequence, 247 residues long: NAD(P)H-quinone oxidoreductase subunit K (247 aa).

Positions 63, 64, 128, and 159 each coordinate [4Fe-4S] cluster. Residues 218–247 (TRQAPPKELTEAIGMEVPPALASQKQKEEA) are disordered.

Belongs to the complex I 20 kDa subunit family. In terms of assembly, NDH-1 can be composed of about 15 different subunits; different subcomplexes with different compositions have been identified which probably have different functions. [4Fe-4S] cluster serves as cofactor.

The protein localises to the cellular thylakoid membrane. The enzyme catalyses a plastoquinone + NADH + (n+1) H(+)(in) = a plastoquinol + NAD(+) + n H(+)(out). It catalyses the reaction a plastoquinone + NADPH + (n+1) H(+)(in) = a plastoquinol + NADP(+) + n H(+)(out). In terms of biological role, NDH-1 shuttles electrons from an unknown electron donor, via FMN and iron-sulfur (Fe-S) centers, to quinones in the respiratory and/or the photosynthetic chain. The immediate electron acceptor for the enzyme in this species is believed to be plastoquinone. Couples the redox reaction to proton translocation, and thus conserves the redox energy in a proton gradient. Cyanobacterial NDH-1 also plays a role in inorganic carbon-concentration. The protein is NAD(P)H-quinone oxidoreductase subunit K of Crocosphaera subtropica (strain ATCC 51142 / BH68) (Cyanothece sp. (strain ATCC 51142)).